Reading from the N-terminus, the 359-residue chain is UPF0283 membrane protein RHECIAT_CH0002430 (359 aa).

The tract at residues M1 to D50 is disordered. A run of 2 helical transmembrane segments spans residues F77–T97 and L111–I131.

This sequence belongs to the UPF0283 family.

The protein resides in the cell inner membrane. This Rhizobium etli (strain CIAT 652) protein is UPF0283 membrane protein RHECIAT_CH0002430.